Reading from the N-terminus, the 286-residue chain is uncharacterized protein (286 aa).

Disordered stretches follow at residues 59–89 (PESAPGKPGCAEAESAGTAAATESHGAPGAK) and 225–286 (RQRK…EDTR). A compositionally biased stretch (low complexity) spans 69–85 (AEAESAGTAAATESHGA).

This is an uncharacterized protein from Mus musculus (Mouse).